A 370-amino-acid polypeptide reads, in one-letter code: Popeye domain-containing 2 (370 aa).

2 helical membrane passes run 51-71 (ALYI…WGWL) and 78-98 (VFIW…HLIF). The tract at residues 275–349 (PSPPGSEGGS…SGEDSTSLIL (75 aa)) is disordered. A compositionally biased stretch (low complexity) spans 283-294 (GSASSPPRGSLG). 2 stretches are compositionally biased toward polar residues: residues 307 to 319 (NPGS…QPDQ) and 330 to 347 (QHWS…STSL).

The protein belongs to the popeye family. As to expression, expressed in the heart and, slightly, in skeletal muscle.

The protein localises to the membrane. It localises to the cell membrane. It is found in the sarcolemma. Important for striated muscle differentiation and cardiac morphogenesis. Is also required for cardiac conduction system development, plays a regulatory function in heart rate dynamics mediated, at least in part, through cAMP-binding. This is Popeye domain-containing 2 from Danio rerio (Zebrafish).